The chain runs to 265 residues: Triosephosphate isomerase (265 aa).

A substrate-binding site is contributed by Asn-13 to Lys-15. Catalysis depends on His-106, which acts as the Electrophile. Catalysis depends on Glu-179, which acts as the Proton acceptor. Residues Gly-185, Ser-223, and Gly-244–Gly-245 contribute to the substrate site.

The protein belongs to the triosephosphate isomerase family. Homodimer.

The protein resides in the cytoplasm. It carries out the reaction D-glyceraldehyde 3-phosphate = dihydroxyacetone phosphate. It participates in carbohydrate biosynthesis; gluconeogenesis. The protein operates within carbohydrate degradation; glycolysis; D-glyceraldehyde 3-phosphate from glycerone phosphate: step 1/1. Functionally, involved in the gluconeogenesis. Catalyzes stereospecifically the conversion of dihydroxyacetone phosphate (DHAP) to D-glyceraldehyde-3-phosphate (G3P). In Acinetobacter baylyi (strain ATCC 33305 / BD413 / ADP1), this protein is Triosephosphate isomerase.